The following is a 358-amino-acid chain: Glycerol-3-phosphate dehydrogenase [NAD(P)+] (358 aa).

S33, F34, R54, and K128 together coordinate NADPH. Sn-glycerol 3-phosphate-binding residues include K128 and G156. A160 is a binding site for NADPH. Sn-glycerol 3-phosphate contacts are provided by K211, D264, S274, R275, and N276. The active-site Proton acceptor is the K211. Position 275 (R275) interacts with NADPH. NADPH contacts are provided by V299 and E301.

Belongs to the NAD-dependent glycerol-3-phosphate dehydrogenase family.

It localises to the cytoplasm. The catalysed reaction is sn-glycerol 3-phosphate + NAD(+) = dihydroxyacetone phosphate + NADH + H(+). It catalyses the reaction sn-glycerol 3-phosphate + NADP(+) = dihydroxyacetone phosphate + NADPH + H(+). The protein operates within membrane lipid metabolism; glycerophospholipid metabolism. In terms of biological role, catalyzes the reduction of the glycolytic intermediate dihydroxyacetone phosphate (DHAP) to sn-glycerol 3-phosphate (G3P), the key precursor for phospholipid synthesis. This is Glycerol-3-phosphate dehydrogenase [NAD(P)+] from Saccharophagus degradans (strain 2-40 / ATCC 43961 / DSM 17024).